Here is a 413-residue protein sequence, read N- to C-terminus: Transforming growth factor beta-2 proprotein (413 aa).

Positions 1–19 (MHYYVLFTFLTLDLAPVAL) are cleaved as a signal peptide. Asn72, Asn140, and Asn241 each carry an N-linked (GlcNAc...) asparagine glycan. Intrachain disulfides connect Cys308–Cys317, Cys316–Cys379, Cys345–Cys410, and Cys349–Cys412.

Belongs to the TGF-beta family. In terms of assembly, interacts with Transforming growth factor beta-2 (TGF-beta-2) chain; interaction is non-covalent and maintains (TGF-beta-2) in a latent state. As to quaternary structure, homodimer; disulfide-linked. Interacts with TGF-beta receptors (tgfbr1 and tgfbr2), leading to signal transduction. In terms of processing, the precursor proprotein is cleaved in the Golgi apparatus to form Transforming growth factor beta-2 (TGF-beta-2) and Latency-associated peptide (LAP) chains, which remain non-covalently linked, rendering TGF-beta-2 inactive.

It localises to the secreted. It is found in the extracellular space. The protein localises to the extracellular matrix. Functionally, precursor of the Latency-associated peptide (LAP) and Transforming growth factor beta-2 (TGF-beta-2) chains, which constitute the regulatory and active subunit of TGF-beta-2, respectively. Its function is as follows. Required to maintain the Transforming growth factor beta-2 (TGF-beta-2) chain in a latent state during storage in extracellular matrix. Associates non-covalently with TGF-beta-2 and regulates its activation via interaction with 'milieu molecules', such as ltbp1 and lrrc32/garp, that control activation of TGF-beta-2. In terms of biological role, multifunctional protein that regulates various processes such as angiogenesis and heart development. Activation into mature form follows different steps: following cleavage of the proprotein in the Golgi apparatus, Latency-associated peptide (LAP) and Transforming growth factor beta-2 (TGF-beta-2) chains remain non-covalently linked rendering TGF-beta-2 inactive during storage in extracellular matrix. At the same time, LAP chain interacts with 'milieu molecules', such as ltbp1 and lrrc32/garp, that control activation of TGF-beta-2 and maintain it in a latent state during storage in extracellular milieus. Once activated following release of LAP, TGF-beta-2 acts by binding to TGF-beta receptors (tgfbr1 and tgfbr2), which transduce signal. This is Transforming growth factor beta-2 proprotein (tgfb2) from Xenopus laevis (African clawed frog).